A 79-amino-acid chain; its full sequence is Protein S100-G (79 aa).

The residue at position 2 (Ser-2) is an N-acetylserine. EF-hand domains lie at 13 to 48 (IFEK…KGPS) and 45 to 79 (KGPS…KISQ). The Ca(2+) site is built by Gln-26 and Glu-31. At Ser-42 the chain carries Phosphoserine. Ca(2+)-binding residues include Asp-58, Asn-60, Asp-62, Glu-64, and Glu-69.

This sequence belongs to the S-100 family.

The chain is Protein S100-G (S100G) from Bos taurus (Bovine).